Consider the following 424-residue polypeptide: Dihydroorotase-like protein (424 aa).

This sequence belongs to the metallo-dependent hydrolases superfamily. DHOase family. PyrC' subfamily. Heterododecamer of 6 active PyrB subunits and 6 non-catalytic PyrC' subunits.

Its function is as follows. Non-functional DHOase. The chain is Dihydroorotase-like protein from Pseudomonas putida (Arthrobacter siderocapsulatus).